The following is a 439-amino-acid chain: Xylose isomerase (439 aa).

Active-site residues include histidine 101 and aspartate 104. 7 residues coordinate Mg(2+): glutamate 232, glutamate 268, histidine 271, aspartate 296, aspartate 307, aspartate 309, and aspartate 339.

This sequence belongs to the xylose isomerase family. In terms of assembly, homotetramer. The cofactor is Mg(2+).

It localises to the cytoplasm. The catalysed reaction is alpha-D-xylose = alpha-D-xylulofuranose. This is Xylose isomerase from Yersinia pseudotuberculosis serotype O:1b (strain IP 31758).